The sequence spans 140 residues: Nucleoside diphosphate kinase (140 aa).

Residues K11, F59, R87, T93, R104, and N114 each contribute to the ATP site. The Pros-phosphohistidine intermediate role is filled by H117.

The protein belongs to the NDK family. In terms of assembly, homotetramer. Mg(2+) serves as cofactor.

The protein localises to the cytoplasm. The catalysed reaction is a 2'-deoxyribonucleoside 5'-diphosphate + ATP = a 2'-deoxyribonucleoside 5'-triphosphate + ADP. It carries out the reaction a ribonucleoside 5'-diphosphate + ATP = a ribonucleoside 5'-triphosphate + ADP. Its function is as follows. Major role in the synthesis of nucleoside triphosphates other than ATP. The ATP gamma phosphate is transferred to the NDP beta phosphate via a ping-pong mechanism, using a phosphorylated active-site intermediate. In Methylorubrum extorquens (strain CM4 / NCIMB 13688) (Methylobacterium extorquens), this protein is Nucleoside diphosphate kinase.